A 418-amino-acid polypeptide reads, in one-letter code: uncharacterized protein (418 aa).

This is an uncharacterized protein from Saccharomyces cerevisiae (strain ATCC 204508 / S288c) (Baker's yeast).